A 235-amino-acid chain; its full sequence is Ion-translocating oxidoreductase complex subunit E (235 aa).

Transmembrane regions (helical) follow at residues 63–83 (LGLG…ISLF), 93–113 (IPIY…LMNA), 117–137 (TLYQ…IIIG), 152–172 (IWDG…LGAL), and 206–226 (SFLL…LLAI).

This sequence belongs to the NqrDE/RnfAE family. As to quaternary structure, the complex is composed of six subunits: RnfA, RnfB, RnfC, RnfD, RnfE and RnfG.

The protein resides in the cell inner membrane. Functionally, part of a membrane-bound complex that couples electron transfer with translocation of ions across the membrane. The polypeptide is Ion-translocating oxidoreductase complex subunit E (Haemophilus influenzae (strain 86-028NP)).